The sequence spans 543 residues: CTP synthase (543 aa).

The segment at Met-1–Leu-267 is amidoligase domain. Ser-15 lines the CTP pocket. Ser-15 is a binding site for UTP. Residues Ser-16–Ile-21 and Asp-73 each bind ATP. Positions 73 and 141 each coordinate Mg(2+). CTP-binding positions include Asp-148 to Glu-150, Lys-188 to Gln-193, and Lys-224. Residues Lys-188–Gln-193 and Lys-224 each bind UTP. The region spanning Lys-292 to Asn-543 is the Glutamine amidotransferase type-1 domain. Gly-354 is a binding site for L-glutamine. Catalysis depends on Cys-381, which acts as the Nucleophile; for glutamine hydrolysis. L-glutamine is bound by residues Leu-382 to Gln-385, Glu-405, and Arg-473. Catalysis depends on residues His-516 and Glu-518.

Belongs to the CTP synthase family. As to quaternary structure, homotetramer.

It carries out the reaction UTP + L-glutamine + ATP + H2O = CTP + L-glutamate + ADP + phosphate + 2 H(+). It catalyses the reaction L-glutamine + H2O = L-glutamate + NH4(+). The enzyme catalyses UTP + NH4(+) + ATP = CTP + ADP + phosphate + 2 H(+). It functions in the pathway pyrimidine metabolism; CTP biosynthesis via de novo pathway; CTP from UDP: step 2/2. Its activity is regulated as follows. Allosterically activated by GTP, when glutamine is the substrate; GTP has no effect on the reaction when ammonia is the substrate. The allosteric effector GTP functions by stabilizing the protein conformation that binds the tetrahedral intermediate(s) formed during glutamine hydrolysis. Inhibited by the product CTP, via allosteric rather than competitive inhibition. Its function is as follows. Catalyzes the ATP-dependent amination of UTP to CTP with either L-glutamine or ammonia as the source of nitrogen. Regulates intracellular CTP levels through interactions with the four ribonucleotide triphosphates. The protein is CTP synthase of Campylobacter jejuni subsp. jejuni serotype O:23/36 (strain 81-176).